The primary structure comprises 460 residues: Allantoinase (460 aa).

Residues His70, His72, Lys157, His193, His250, and Asp323 each contribute to the Zn(2+) site. The residue at position 157 (Lys157) is an N6-carboxylysine.

Belongs to the metallo-dependent hydrolases superfamily. Allantoinase family. In terms of assembly, homotetramer. The cofactor is Zn(2+). Carboxylation allows a single lysine to coordinate two zinc ions.

It carries out the reaction (S)-allantoin + H2O = allantoate + H(+). It functions in the pathway nitrogen metabolism; (S)-allantoin degradation; allantoate from (S)-allantoin: step 1/1. Functionally, catalyzes the conversion of allantoin (5-ureidohydantoin) to allantoic acid by hydrolytic cleavage of the five-member hydantoin ring. Involved in the utilization of purines as secondary nitrogen sources, when primary sources are limiting. The polypeptide is Allantoinase (DAL1) (Saccharomyces cerevisiae (strain ATCC 204508 / S288c) (Baker's yeast)).